Here is a 430-residue protein sequence, read N- to C-terminus: DNA repair protein recA homolog 3, mitochondrial (430 aa).

The N-terminal 35 residues, 1–35 (MARILRNVYSLRSSLFSSELLRRSVVGTSFQLRGF), are a transit peptide targeting the mitochondrion. 119–126 (GPEASGKT) is a binding site for ATP. Residues 385–415 (DEAADKETESESEEEDSLRVVVSPDNTDDES) are disordered.

The protein belongs to the RecA family.

The protein localises to the mitochondrion. Its function is as follows. Involved in recombination ability and DNA strand transfer activity. In Arabidopsis thaliana (Mouse-ear cress), this protein is DNA repair protein recA homolog 3, mitochondrial.